The following is a 2094-amino-acid chain: Protein Ycf2 (2094 aa).

1385 to 1392 (GPPETGRS) contacts ATP.

It belongs to the Ycf2 family.

Its subcellular location is the plastid. It is found in the chloroplast stroma. Its function is as follows. Probable ATPase of unknown function. Its presence in a non-photosynthetic plant (Epifagus virginiana) and experiments in tobacco indicate that it has an essential function which is probably not related to photosynthesis. This Huperzia lucidula (Shining clubmoss) protein is Protein Ycf2.